The following is a 210-amino-acid chain: Putative biopolymer transport protein ExbB-like 3 (210 aa).

3 helical membrane passes run 2 to 22, 104 to 124, and 152 to 172; these read AGGI…ALII, LFQT…ILGL, and LVST…ANVF.

It belongs to the ExbB/TolQ family.

The protein localises to the cell inner membrane. Its function is as follows. Involved in the TonB-dependent energy-dependent transport of various receptor-bound substrates. Protects ExbD from proteolytic degradation and functionally stabilizes TonB. The polypeptide is Putative biopolymer transport protein ExbB-like 3 (Synechocystis sp. (strain ATCC 27184 / PCC 6803 / Kazusa)).